The sequence spans 1922 residues: Endoribonuclease Dicer (1922 aa).

The 177-residue stretch at 51-227 (LLEAALDHNT…ELEEKIQKLE (177 aa)) folds into the Helicase ATP-binding domain. Position 64-71 (64-71 (LNTGSGKT)) interacts with ATP. The DECH box motif lies at 175-178 (DECH). Residues 256-595 (DCGPFTDRSG…LRNKCSKSVD (340 aa)) form a required for interaction with PRKRA and TARBP2 region. The interval 409-433 (YVSWSDSEDDDEDEEIEEKEKPETN) is disordered. Phosphoserine is present on residues Ser-413 and Ser-415. Residues 414–425 (DSEDDDEDEEIE) are compositionally biased toward acidic residues. Residues 433–602 (NFPSPFTNIL…SVDTGETDID (170 aa)) enclose the Helicase C-terminal domain. The region spanning 630-722 (AIGHINRYCA…MPVGKETVKY (93 aa)) is the Dicer dsRNA-binding fold domain. The region spanning 895 to 1042 (KFMEDIEKSE…LVPELCAIHP (148 aa)) is the PAZ domain. Residues Ser-1016 and Ser-1160 each carry the phosphoserine modification. The region spanning 1276–1403 (DSEQSPSIGY…TDKWEKDEMT (128 aa)) is the RNase III 1 domain. Mg(2+) is bound by residues Glu-1316, Asp-1395, and Glu-1398. Phosphoserine occurs at positions 1460, 1468, and 1470. Residues 1666 to 1824 (FENFEKKINY…LAGAIYMDSG (159 aa)) enclose the RNase III 2 domain. Mg(2+) contacts are provided by Glu-1705, Asp-1810, and Glu-1813. The 66-residue stretch at 1849–1914 (VPRSPVRELL…ARRALRSLKA (66 aa)) folds into the DRBM domain. The residue at position 1868 (Ser-1868) is a Phosphoserine.

It belongs to the helicase family. Dicer subfamily. As to quaternary structure, component of the RISC loading complex (RLC), or micro-RNA (miRNA) loading complex (miRLC), which is composed of DICER1, AGO2 and TARBP2; DICER1 and TARBP2 are required to process precursor miRNAs (pre-miRNAs) to mature miRNAs and then load them onto AGO2. Note that the trimeric RLC/miRLC is also referred to as RISC. Interacts with DHX9, AGO1, PIWIL1 and PRKRA. Associates with the 60S ribosome. Interacts with BCDIN3D. Interacts with AGO2, TARBP2, EIF6, MOV10 and RPL7A (60S ribosome subunit); they form a large RNA-induced silencing complex (RISC). Interacts (via Dicer dsRNA-binding fold domain) with ALOX5 (via PLAT domain); this interaction enhances arachidonate 5-lipoxygenase activity and modifies the miRNA precursor processing activity of DICER1. (Microbial infection) Interacts with ebolavirus transcriptional activator VP30; this interaction prevents TARBP2/TRBP binding to DICER1 and thus allows the virus to counteract host RNA silencing. In terms of assembly, (Microbial infection) Interacts with ebolavirus transcriptional activator VP35; this interaction prevents TARBP2/TRBP binding to DICER1 and thus allows the virus to counteract host RNA silencing. The cofactor is Mg(2+). Mn(2+) is required as a cofactor.

The protein localises to the cytoplasm. It is found in the perinuclear region. The enzyme catalyses Endonucleolytic cleavage to 5'-phosphomonoester.. Its function is as follows. Double-stranded RNA (dsRNA) endoribonuclease playing a central role in short dsRNA-mediated post-transcriptional gene silencing. Cleaves naturally occurring long dsRNAs and short hairpin pre-microRNAs (miRNA) into fragments of twenty-one to twenty-three nucleotides with 3' overhang of two nucleotides, producing respectively short interfering RNAs (siRNA) and mature microRNAs. SiRNAs and miRNAs serve as guide to direct the RNA-induced silencing complex (RISC) to complementary RNAs to degrade them or prevent their translation. Gene silencing mediated by siRNAs, also called RNA interference, controls the elimination of transcripts from mobile and repetitive DNA elements of the genome but also the degradation of exogenous RNA of viral origin for instance. The miRNA pathway on the other side is a mean to specifically regulate the expression of target genes. This Homo sapiens (Human) protein is Endoribonuclease Dicer (DICER1).